The chain runs to 143 residues: MSKATCSFEGCHSAVITINDDNIINLPEQVHSEFKLLENRTMRDATPSESNFLVVPDVWDFDNVGVSREIPSSILGDLSDKSDFVFEYGNSSWKIKKCLKYLICADCDKGPIGIICKVQDQTKNEERVLHLLSLRSLQIMGRN.

The 131-residue stretch at 1-131 (MSKATCSFEG…TKNEERVLHL (131 aa)) folds into the MSS4 domain. Cys-6, Cys-11, Cys-104, and Cys-107 together coordinate Zn(2+).

The protein belongs to the DSS4/MSS4 family.

Its function is as follows. Guanine-nucleotide-releasing protein that acts on SEC4. Might play a general role in vesicular transport. In Saccharomyces cerevisiae (strain ATCC 204508 / S288c) (Baker's yeast), this protein is Protein DSS4 (DSS4).